Reading from the N-terminus, the 445-residue chain is Phosphoglucosamine mutase (445 aa).

S102 acts as the Phosphoserine intermediate in catalysis. The Mg(2+) site is built by S102, D241, D243, and D245. A Phosphoserine modification is found at S102.

The protein belongs to the phosphohexose mutase family. It depends on Mg(2+) as a cofactor. Activated by phosphorylation.

The catalysed reaction is alpha-D-glucosamine 1-phosphate = D-glucosamine 6-phosphate. Its function is as follows. Catalyzes the conversion of glucosamine-6-phosphate to glucosamine-1-phosphate. This Acinetobacter baumannii (strain ACICU) protein is Phosphoglucosamine mutase.